We begin with the raw amino-acid sequence, 317 residues long: Phospho-N-acetylmuramoyl-pentapeptide-transferase (317 aa).

9 consecutive transmembrane segments (helical) span residues 3–23 (VIIYSVLISFLFSILQGPLFI), 48–68 (GTPTMGGIIFITTAIIAMIIM), 72–92 (LNSNAVFAFVCFFSFAMIGLI), 112–132 (FLLQIIVSAAISYYAYIRFGS), 141–161 (ITWTLPPIVYMAAVVFYFVAV), 171–191 (LDGLASSVTILVVTFFTVVSF), 193–213 (WHQYELSVFCGIIVGILLGFL), 238–258 (AIALVLKLPLLVIIVGGIYVI), and 297–317 (VVSVFSIVTVILCLIAFLSLI).

The protein belongs to the glycosyltransferase 4 family. MraY subfamily. Mg(2+) serves as cofactor.

Its subcellular location is the cell membrane. It carries out the reaction UDP-N-acetyl-alpha-D-muramoyl-L-alanyl-gamma-D-glutamyl-meso-2,6-diaminopimeloyl-D-alanyl-D-alanine + di-trans,octa-cis-undecaprenyl phosphate = di-trans,octa-cis-undecaprenyl diphospho-N-acetyl-alpha-D-muramoyl-L-alanyl-D-glutamyl-meso-2,6-diaminopimeloyl-D-alanyl-D-alanine + UMP. The protein operates within cell wall biogenesis; peptidoglycan biosynthesis. Functionally, catalyzes the initial step of the lipid cycle reactions in the biosynthesis of the cell wall peptidoglycan: transfers peptidoglycan precursor phospho-MurNAc-pentapeptide from UDP-MurNAc-pentapeptide onto the lipid carrier undecaprenyl phosphate, yielding undecaprenyl-pyrophosphoryl-MurNAc-pentapeptide, known as lipid I. The chain is Phospho-N-acetylmuramoyl-pentapeptide-transferase from Clostridium acetobutylicum (strain ATCC 824 / DSM 792 / JCM 1419 / IAM 19013 / LMG 5710 / NBRC 13948 / NRRL B-527 / VKM B-1787 / 2291 / W).